The sequence spans 223 residues: MKRTKSIHHASFRKSWSARHLTPVALAVTAVFMLAGCEKSDETVSLYQNADDCSAANPGKSAECTTAYNNALKEAERTAPKYATREDCVAEFGEGQCQQAPAQAGMAPENQAQSQQSSGSFWMPLMAGYMMGRLMGGGAGFAQQPLFSSKNPASPAYGKYTDAAGKNYGAAQPGRTMTVPKTAMAPKPATTTTVTRGGFGESVAKQSTMQRSAAGTSTRSMGG.

The tract at residues 201–223 (ESVAKQSTMQRSAAGTSTRSMGG) is disordered. A compositionally biased stretch (polar residues) spans 204-223 (AKQSTMQRSAAGTSTRSMGG).

Belongs to the UPF0441 family.

In Salmonella gallinarum (strain 287/91 / NCTC 13346), this protein is UPF0441 protein YgiB.